A 498-amino-acid polypeptide reads, in one-letter code: Polygalacturonan/rhamnogalacturonan-binding protein YtcQ (498 aa).

The first 22 residues, 1–22, serve as a signal peptide directing secretion; sequence MGNKWRVLLIVLVLALGGVLAG. A lipid anchor (N-palmitoyl cysteine) is attached at Cys23. A lipid anchor (S-diacylglycerol cysteine) is attached at Cys23.

The protein belongs to the bacterial solute-binding protein 1 family. In terms of assembly, the complex is probably composed of two ATP-binding proteins (MsmX), two transmembrane proteins (YtcP and YteP) and a solute-binding protein (YtcQ).

Its subcellular location is the cell membrane. Its function is as follows. Involved in pectin degradation. Part of the ABC transporter complex YtcQP-YteP involved in the uptake of polygalacturonan and rhamnogalacturonan type I. This is Polygalacturonan/rhamnogalacturonan-binding protein YtcQ (ytcQ) from Bacillus subtilis (strain 168).